The following is a 100-amino-acid chain: MEASGSAGNDRVRNLQSEVEGVKNIMTQNVERILARGENLDHLRNKTEDLEATSEHFKTTSQKVARKFWWKNVKMIVIICVIVLIILILIILFATGTIPT.

At 1–74 (MEASGSAGND…ARKFWWKNVK (74 aa)) the chain is on the cytoplasmic side. A phosphoserine mark is found at serine 4 and serine 17. In terms of domain architecture, v-SNARE coiled-coil homology spans 11–71 (RVRNLQSEVE…QKVARKFWWK (61 aa)). Phosphothreonine occurs at positions 27, 47, and 53. Serine 54 bears the Phosphoserine mark. A helical; Anchor for type IV membrane protein membrane pass occupies residues 75 to 95 (MIVIICVIVLIILILIILFAT). Over 96-100 (GTIPT) the chain is Vesicular.

It belongs to the synaptobrevin family. As to quaternary structure, forms a SNARE complex composed of VAMP8, SNAP29 and STX17 involved in fusion of autophagosome with lysosome. Found in a number of SNARE complexes with NAPA, SNAP23, SNAP25, STX1A, STX4, STX7, STX8 and VTI1B. Interacts with PICALM. SNARE complex formation and binding by PICALM are mutually exclusive processes for VAMP8. Interacts with SBF2/MTMR13. Interacts with RAB21 (in GTP-bound form) in response to starvation; the interaction probably regulates VAMP8 endolysosomal trafficking. Interacts with STX17; this interaction is increased in the absence of TMEM39A. Interacts with TRIM6. In terms of tissue distribution, expressed (at protein level) at a high level in kidney, lung and spleen; at a lower level in testis, liver, brain and heart. Expressed in kidney and retinal pigment epithelium derived cell line.

The protein resides in the lysosome membrane. The protein localises to the late endosome membrane. It is found in the early endosome membrane. Its subcellular location is the midbody. It localises to the cell membrane. The protein resides in the zymogen granule membrane. Functionally, SNAREs, soluble N-ethylmaleimide-sensitive factor-attachment protein receptors, are essential proteins for fusion of cellular membranes. SNAREs localized on opposing membranes assemble to form a trans-SNARE complex, an extended, parallel four alpha-helical bundle that drives membrane fusion. VAMP8 is a SNARE involved in autophagy through the direct control of autophagosome membrane fusion with the lysososome membrane via its interaction with the STX17-SNAP29 binary t-SNARE complex. Also required for dense-granule secretion in platelets. Also plays a role in regulated enzyme secretion in pancreatic acinar cells. Involved in the abscission of the midbody during cell division, which leads to completely separate daughter cells. Involved in the homotypic fusion of early and late endosomes. Also participates in the activation of type I interferon antiviral response through a TRIM6-dependent mechanism. This is Vesicle-associated membrane protein 8 from Rattus norvegicus (Rat).